The sequence spans 436 residues: Acetyl-CoA decarbonylase/synthase complex subunit delta 2 (436 aa).

The protein belongs to the CdhD family. Heterodimer of delta and gamma chains. The ACDS complex is made up of alpha, epsilon, beta, gamma and delta chains with a probable stoichiometry of (alpha(2)epsilon(2))(4)-beta(8)-(gamma(1)delta(1))(8) (Potential).

It functions in the pathway one-carbon metabolism; methanogenesis from acetate. Part of a complex that catalyzes the reversible cleavage of acetyl-CoA, allowing growth on acetate as sole source of carbon and energy. Probably maintains the overall quaternary structure of the ACDS complex. In Methanosarcina acetivorans (strain ATCC 35395 / DSM 2834 / JCM 12185 / C2A), this protein is Acetyl-CoA decarbonylase/synthase complex subunit delta 2 (cdhD2).